The following is a 293-amino-acid chain: 4-diphosphocytidyl-2-C-methyl-D-erythritol kinase (293 aa).

The active site involves lysine 16. Residue 99–109 (PMGAGLGGGSS) participates in ATP binding. Residue aspartate 141 is part of the active site.

This sequence belongs to the GHMP kinase family. IspE subfamily.

The catalysed reaction is 4-CDP-2-C-methyl-D-erythritol + ATP = 4-CDP-2-C-methyl-D-erythritol 2-phosphate + ADP + H(+). The protein operates within isoprenoid biosynthesis; isopentenyl diphosphate biosynthesis via DXP pathway; isopentenyl diphosphate from 1-deoxy-D-xylulose 5-phosphate: step 3/6. Catalyzes the phosphorylation of the position 2 hydroxy group of 4-diphosphocytidyl-2C-methyl-D-erythritol. This is 4-diphosphocytidyl-2-C-methyl-D-erythritol kinase from Paraburkholderia xenovorans (strain LB400).